Reading from the N-terminus, the 817-residue chain is Neurabin-2 (817 aa).

Disordered regions lie at residues 1-52 (MMKT…KYGS) and 64-163 (MGTT…GGDK). 2 actin-binding regions span residues 1-154 (MMKT…FERS) and 164-282 (EAVA…QHRV). Phosphoserine; by MAPK1 is present on serine 15. Residue serine 17 is modified to Phosphoserine; by CDK5. At serine 94 the chain carries Phosphoserine; by PKA. Residues serine 100 and serine 116 each carry the phosphoserine modification. Positions 100–371 (SLNENVDHSA…LERGVDNGRA (272 aa)) are interaction with D(2) dopamine receptor. The segment covering 131–141 (SAQPAPPPHPP) has biased composition (pro residues). The interaction with ADRA2A, ADRA2B and ADRA2C stretch occupies residues 169–255 (RLLRQERAGL…KRSRVFQPPP (87 aa)). A Phosphoserine modification is found at serine 192. Threonine 193 is subject to Phosphothreonine. Serine 205 is modified (phosphoserine; by MAPK1). The residue at position 207 (threonine 207) is a Phosphothreonine. Residues 216–451 (EKADSRTGLH…DPAPSRKIHF (236 aa)) are disordered. A compositionally biased stretch (basic and acidic residues) spans 290–301 (KPREVRKIKPVE). 2 stretches are compositionally biased toward low complexity: residues 332–341 (STPATTASPA) and 399–409 (SGLGEDSGGSA). Over residues 410–425 (LEEDDEEDEEDGEPPY) the composition is skewed to acidic residues. An interaction with protein phosphatase 1 region spans residues 417-494 (DEEDGEPPYE…LEKRVERLEL (78 aa)). Serine 438 carries the phosphoserine modification. The PP1-binding motif signature appears at 447-451 (RKIHF). The tract at residues 480–525 (SAEYELEKRVERLELFPVELEKDSEGLGISIIGMGAGADMGLEKLG) is interaction with RGS2. In terms of domain architecture, PDZ spans 496–584 (PVELEKDSEG…RVRFMIGRER (89 aa)). Residues 595 to 616 (IQQTLEQERWQREMMEQRYAQY) adopt a coiled-coil conformation. The tract at residues 595 to 816 (IQQTLEQERW…NLQTLRNSNS (222 aa)) is interaction with TGN38. Serine 658 carries the phosphoserine modification. Residues 665 to 816 (EKLVHKFKEL…NLQTLRNSNS (152 aa)) adopt a coiled-coil conformation.

As to quaternary structure, possibly exists as a homodimer, homotrimer or a homotetramer. Interacts with F-actin, PPP1CA, neurabin-1, TGN38 and D(2) dopamine receptor. Interacts with RGS1, RGS2, RGS4, RGS19 and ADRA1B, ADRA2A, ADRA2B, ADRA2C, CDKN2A, PPP1R2, RASGFR1 and TIAM1. Interacts (via C-terminus) with SPATA13 (via C-terminal tail). Interacts with DCLK2. Interacts with ADRA2B. In terms of processing, stimulation of D1 (but not D2) dopamine receptors induces Ser-94 phosphorylation. Dephosphorylation of Ser-94 is mediated mainly by PP1 and to a lesser extent by PP2A. Phosphorylation of spinophilin disrupts its association with F-actin, but does not affect its binding to PP1.

Its subcellular location is the cytoplasm. The protein resides in the cytoskeleton. It is found in the nucleus. It localises to the postsynaptic density. The protein localises to the cell junction. Its subcellular location is the adherens junction. The protein resides in the cell projection. It is found in the dendritic spine. It localises to the cell membrane. The protein localises to the lamellipodium. Its subcellular location is the filopodium. The protein resides in the ruffle membrane. Seems to act as a scaffold protein in multiple signaling pathways. Modulates excitatory synaptic transmission and dendritic spine morphology. Binds to actin filaments (F-actin) and shows cross-linking activity. Binds along the sides of the F-actin. May play an important role in linking the actin cytoskeleton to the plasma membrane at the synaptic junction. Believed to target protein phosphatase 1/PP1 to dendritic spines, which are rich in F-actin, and regulates its specificity toward ion channels and other substrates, such as AMPA-type and NMDA-type glutamate receptors. Plays a role in regulation of G-protein coupled receptor signaling, including dopamine D2 receptors and alpha-adrenergic receptors. May establish a signaling complex for dopaminergic neurotransmission through D2 receptors by linking receptors downstream signaling molecules and the actin cytoskeleton. Binds to ADRA1B and RGS2 and mediates regulation of ADRA1B signaling. May confer to Rac signaling specificity by binding to both, RacGEFs and Rac effector proteins. Probably regulates p70 S6 kinase activity by forming a complex with TIAM1. Required for hepatocyte growth factor (HGF)-induced cell migration. This is Neurabin-2 (Ppp1r9b) from Mus musculus (Mouse).